The following is a 569-amino-acid chain: Urease subunit alpha (569 aa).

The Urease domain occupies 131 to 569 (GGVDAHIHFI…VAMAQRYFLF (439 aa)). Residues His136, His138, and Lys219 each coordinate Ni(2+). At Lys219 the chain carries N6-carboxylysine. Residue His221 coordinates substrate. 2 residues coordinate Ni(2+): His248 and His274. His322 acts as the Proton donor in catalysis. Residue Asp362 participates in Ni(2+) binding.

The protein belongs to the metallo-dependent hydrolases superfamily. Urease alpha subunit family. As to quaternary structure, heterotrimer of UreA (gamma), UreB (beta) and UreC (alpha) subunits. Three heterotrimers associate to form the active enzyme. The cofactor is Ni cation. Carboxylation allows a single lysine to coordinate two nickel ions.

It localises to the cytoplasm. It carries out the reaction urea + 2 H2O + H(+) = hydrogencarbonate + 2 NH4(+). It functions in the pathway nitrogen metabolism; urea degradation; CO(2) and NH(3) from urea (urease route): step 1/1. In Geobacillus kaustophilus (strain HTA426), this protein is Urease subunit alpha.